Here is a 794-residue protein sequence, read N- to C-terminus: Ent-copalyl diphosphate synthase 2 (794 aa).

A chloroplast-targeting transit peptide spans 1–35; sequence MSSSSNVTSLPRLTTAGGVFPREMVRVHSSCNILR. K238 serves as a coordination point for substrate. D369 and D371 together coordinate Mg(2+). Positions 369 to 372 match the DXDD motif motif; that stretch reads DVDD. K455 serves as a coordination point for substrate.

This sequence belongs to the terpene synthase family. Tpsc subfamily. It depends on Mg(2+) as a cofactor. In terms of tissue distribution, expressed in leaves.

Its subcellular location is the plastid. It is found in the chloroplast. The catalysed reaction is (2E,6E,10E)-geranylgeranyl diphosphate = ent-copalyl diphosphate. It functions in the pathway secondary metabolite biosynthesis; terpenoid biosynthesis. In terms of biological role, involved in the biosynthesis of ent-kaurene diterpenoids natural products such as oridonin, miltiradiene, eriocalyxin B and nezukol, known to exhibit antitumor, anti-inflammatory and antibacterial activities. Catalyzes the conversion of (2E,6E,10E)-geranylgeranyl diphosphate (GGPP) to ent-copalyl diphosphate (ent-CPP). This Isodon eriocalyx (Plectranthus eriocalyx) protein is Ent-copalyl diphosphate synthase 2.